The following is a 230-amino-acid chain: MKITYFGQSAFQIKTGKTTILIDPFLTGNKHTKVDPFDLNPEYILLTHAHQDHTGDSFDIARRTGATIITQTDYAQYINDILPEAKGCHAEGINFGGTFSADDFSVKLYPAWHTDARMVGNALVPVGVAAGMALTIEDKLIYDTGDTALFSDLKLVARKHPVDLALICIGGHFTMDADDALVAADFLQAKHVIPTHYNTFPSIQADPQKFVEQLPTGVGIIPDFDKEFDF.

The protein belongs to the UPF0173 family.

This chain is UPF0173 metal-dependent hydrolase OEOE_1287, found in Oenococcus oeni (strain ATCC BAA-331 / PSU-1).